We begin with the raw amino-acid sequence, 557 residues long: UvrABC system protein C (557 aa).

The GIY-YIG domain maps to 14 to 89 (EEPGVYIFKN…IKKYRPKYNV (76 aa)). Residues 194-229 (EEVFDYLKEKMETHSRMLDFENAAKYRDLLLNLSNV) enclose the UVR domain.

It belongs to the UvrC family. As to quaternary structure, interacts with UvrB in an incision complex.

The protein resides in the cytoplasm. Its function is as follows. The UvrABC repair system catalyzes the recognition and processing of DNA lesions. UvrC both incises the 5' and 3' sides of the lesion. The N-terminal half is responsible for the 3' incision and the C-terminal half is responsible for the 5' incision. The chain is UvrABC system protein C from Thermotoga petrophila (strain ATCC BAA-488 / DSM 13995 / JCM 10881 / RKU-1).